A 351-amino-acid polypeptide reads, in one-letter code: Tetraacyldisaccharide 4'-kinase (351 aa).

Thr61–Thr68 contacts ATP.

It belongs to the LpxK family.

The enzyme catalyses a lipid A disaccharide + ATP = a lipid IVA + ADP + H(+). It functions in the pathway glycolipid biosynthesis; lipid IV(A) biosynthesis; lipid IV(A) from (3R)-3-hydroxytetradecanoyl-[acyl-carrier-protein] and UDP-N-acetyl-alpha-D-glucosamine: step 6/6. Its function is as follows. Transfers the gamma-phosphate of ATP to the 4'-position of a tetraacyldisaccharide 1-phosphate intermediate (termed DS-1-P) to form tetraacyldisaccharide 1,4'-bis-phosphate (lipid IVA). This is Tetraacyldisaccharide 4'-kinase from Xanthomonas campestris pv. campestris (strain 8004).